We begin with the raw amino-acid sequence, 517 residues long: Cytochrome P450 monooxygenase stcB (517 aa).

Cysteine 461 provides a ligand contact to heme.

The protein belongs to the cytochrome P450 family. The cofactor is heme.

It functions in the pathway mycotoxin biosynthesis; sterigmatocystin biosynthesis. Cytochrome P450 monooxygenase; part of the gene cluster that mediates the biosynthesis of sterigmatocystin (ST), a polyketide-derived furanocoumarin which is part of the most toxic and carcinogenic compounds among the known mycotoxins. The first step in the biosynthesis of sterigmatocystin is the production of hexanoate by the fatty acid synthase (FAS) units stcJ and stcK. The polyketide backbone is assembled by the non-reducing polyketide synthase stcA by condensation of the starter hexanoyl-CoA and 7 malonyl-CoA extender units followed by cyclization and release of norsolorinic acid. Norsolorinic acid is the first stable intermediate in the biosynthesis of sterigmatocystin and is converted into averantin (AVN) by the ketoreductase stcE which reduces the hexanoate ketone to an alcohol. Averantin is then oxidized into 5'-hydroxyaverantin (HAVN) by the cytochrome P450 monooxygenase stcF. 5'-hydroxyaverantin is further converted to 5'-oxyaverantin (OAVN) by the 5'-hydroxyaverantin dehydrogenase stcG. The next step is the conversion of OAVN into averufin (AVF) which is catalyzed by a yet to be identified enzyme. The cytochrome P450 monooxygenase stcB and the flavin-binding monooxygenase stcW are both required for the conversion of averufin to 1-hydroxyversicolorone. The esterase stcI probably catalyzes the formation of versiconal hemiacetal acetate from 1-hydroxyversicolorone. The oxydoreductase stcN then probably catalyzes the biosynthetic step from versiconal to versicolorin B (VERB). The next step is performed by the versicolorin B desaturase stcL to produce versicolorin A (VERA). The ketoreductase stcU and the cytochrome P450 monooxygenase stcS are involved in the conversion of versicolorin A to demethylsterigmatocystin. The Baeyer-Villiger oxidas stcQ and the reductase stcR might be involved in the biosynthetic step from versicolorin A to demethylsterigmatocystin. The final step in the biosynthesis of sterigmatocystin is the methylation of demethylsterigmatocystin catalyzed by the methyltransferase stcP. The sequence is that of Cytochrome P450 monooxygenase stcB from Emericella nidulans (strain FGSC A4 / ATCC 38163 / CBS 112.46 / NRRL 194 / M139) (Aspergillus nidulans).